A 369-amino-acid polypeptide reads, in one-letter code: Methylthioribose-1-phosphate isomerase (369 aa).

Residue methionine 1 is modified to N-acetylmethionine. Arginine 158 carries the post-translational modification Omega-N-methylarginine. Aspartate 248 (proton donor) is an active-site residue. Phosphoserine is present on serine 366.

The protein belongs to the eIF-2B alpha/beta/delta subunits family. MtnA subfamily.

Its subcellular location is the cytoplasm. It localises to the nucleus. The enzyme catalyses 5-(methylsulfanyl)-alpha-D-ribose 1-phosphate = 5-(methylsulfanyl)-D-ribulose 1-phosphate. It functions in the pathway amino-acid biosynthesis; L-methionine biosynthesis via salvage pathway; L-methionine from S-methyl-5-thio-alpha-D-ribose 1-phosphate: step 1/6. In terms of biological role, catalyzes the interconversion of methylthioribose-1-phosphate (MTR-1-P) into methylthioribulose-1-phosphate (MTRu-1-P). The polypeptide is Methylthioribose-1-phosphate isomerase (Mri1) (Rattus norvegicus (Rat)).